The following is a 331-amino-acid chain: Myc-associated zinc finger protein (331 aa).

2 disordered regions span residues 46–65 (AQSP…APAA) and 108–131 (TVDT…SAPA). The span at 117-127 (PPAPPPPPPAV) shows a compositional bias: pro residues. 4 C2H2-type zinc fingers span residues 177-199 (YICA…EAIH), 266-288 (HACE…KLSH), 294-316 (YQCP…VRSH), and 324-331 (YNCSHCGK).

As to quaternary structure, interacts with BPTF. Ubiquitously expressed.

The protein localises to the nucleus. In terms of biological role, transcriptional regulator. Acts as a transcriptional activator that binds to purine-rich GAGA sites found in the promoter of many genes including insulin I and II and islet amyloid polypeptide. The polypeptide is Myc-associated zinc finger protein (MAZ) (Mesocricetus auratus (Golden hamster)).